Consider the following 183-residue polypeptide: Adenylate kinase (183 aa).

12 to 17 is a binding site for ATP; it reads GAGKGT. Residues 32-61 are NMP; that stretch reads STGDLLRSEVSAGSALGQEAEAVMNRGELV. Residues Thr33, Arg38, 59 to 61, 86 to 89, and Gln93 contribute to the AMP site; these read ELV and GFPR. The interval 127-133 is LID; sequence ARGRADD. An ATP-binding site is contributed by Arg128. AMP contacts are provided by Arg130 and Arg141. ATP is bound at residue Gly169.

Belongs to the adenylate kinase family. In terms of assembly, monomer.

Its subcellular location is the cytoplasm. The catalysed reaction is AMP + ATP = 2 ADP. The protein operates within purine metabolism; AMP biosynthesis via salvage pathway; AMP from ADP: step 1/1. Its function is as follows. Catalyzes the reversible transfer of the terminal phosphate group between ATP and AMP. Plays an important role in cellular energy homeostasis and in adenine nucleotide metabolism. This is Adenylate kinase from Synechococcus sp. (strain WH7803).